We begin with the raw amino-acid sequence, 171 residues long: CS1 fimbrial subunit A (171 aa).

The first 23 residues, 1–23 (MKLKKTIGAMALATLFATMGASA), serve as a signal peptide directing secretion.

Belongs to the fimbrial CS1 protein family.

The protein localises to the fimbrium. Functionally, fimbriae (also called pili), polar filaments radiating from the surface of the bacterium to a length of 0.5-1.5 micrometers and numbering 100-300 per cell, enable bacteria to colonize the epithelium of specific host organs. In Escherichia coli, this protein is CS1 fimbrial subunit A (csoA).